The chain runs to 267 residues: Tryptophan synthase alpha chain (267 aa).

Catalysis depends on proton acceptor residues Glu49 and Asp60.

This sequence belongs to the TrpA family. In terms of assembly, tetramer of two alpha and two beta chains.

The enzyme catalyses (1S,2R)-1-C-(indol-3-yl)glycerol 3-phosphate + L-serine = D-glyceraldehyde 3-phosphate + L-tryptophan + H2O. The protein operates within amino-acid biosynthesis; L-tryptophan biosynthesis; L-tryptophan from chorismate: step 5/5. In terms of biological role, the alpha subunit is responsible for the aldol cleavage of indoleglycerol phosphate to indole and glyceraldehyde 3-phosphate. The polypeptide is Tryptophan synthase alpha chain (Cyanothece sp. (strain PCC 7425 / ATCC 29141)).